Here is a 462-residue protein sequence, read N- to C-terminus: Chitinase-like mite allergen Der f 18.0101 (462 aa).

The signal sequence occupies residues Met1–Ala25. The region spanning Pro29–Gly378 is the GH18 domain. Cys33 and Cys58 are joined by a disulfide. Asn338 is a glycosylation site (N-linked (GlcNAc...) asparagine). Positions Val404 to Cys462 constitute a Chitin-binding type-2 domain. Residues Cys439 and Cys453 are joined by a disulfide bond.

The protein belongs to the glycosyl hydrolase 18 family. Chitinase class II subfamily. As to expression, expressed in the upper digestive tract. Staining is observed in the ventriculus, and in very rare individuals, also in the intestine or esophagus. No expression in fecal pellets neither inside the rectum nor defecated outside of the body.

It localises to the secreted. Probably a non-catalytic chitinase-like protein, which binds to insoluble chitin and enhances the activity of the catalytic chitinases. Has weak chitin-binding activity. This chain is Chitinase-like mite allergen Der f 18.0101, found in Dermatophagoides farinae (American house dust mite).